The following is a 268-amino-acid chain: Type-5 uracil-DNA glycosylase (268 aa).

Residues 1–29 (MHPKTGRAFRSPVEPGSGWPGDPATPQTP) are disordered. The [4Fe-4S] cluster site is built by cysteine 57, cysteine 60, cysteine 161, and cysteine 176.

Belongs to the uracil-DNA glycosylase (UDG) superfamily. Type 5 (UDGb) family.

DNA glycosylase with broad substrate specificity. The sequence is that of Type-5 uracil-DNA glycosylase from Mycobacterium bovis (strain ATCC BAA-935 / AF2122/97).